We begin with the raw amino-acid sequence, 105 residues long: Large ribosomal subunit protein uL24 (105 aa).

Belongs to the universal ribosomal protein uL24 family. As to quaternary structure, part of the 50S ribosomal subunit.

Functionally, one of two assembly initiator proteins, it binds directly to the 5'-end of the 23S rRNA, where it nucleates assembly of the 50S subunit. Its function is as follows. One of the proteins that surrounds the polypeptide exit tunnel on the outside of the subunit. The protein is Large ribosomal subunit protein uL24 of Vibrio campbellii (strain ATCC BAA-1116).